Here is a 184-residue protein sequence, read N- to C-terminus: ATP synthase subunit b, chloroplastic (184 aa).

The chain crosses the membrane as a helical span at residues 31–49 (IINSSVVLSVLIYFGKGVL).

Belongs to the ATPase B chain family. F-type ATPases have 2 components, F(1) - the catalytic core - and F(0) - the membrane proton channel. F(1) has five subunits: alpha(3), beta(3), gamma(1), delta(1), epsilon(1). F(0) has four main subunits: a(1), b(1), b'(1) and c(10-14). The alpha and beta chains form an alternating ring which encloses part of the gamma chain. F(1) is attached to F(0) by a central stalk formed by the gamma and epsilon chains, while a peripheral stalk is formed by the delta, b and b' chains.

The protein localises to the plastid. The protein resides in the chloroplast thylakoid membrane. Functionally, f(1)F(0) ATP synthase produces ATP from ADP in the presence of a proton or sodium gradient. F-type ATPases consist of two structural domains, F(1) containing the extramembraneous catalytic core and F(0) containing the membrane proton channel, linked together by a central stalk and a peripheral stalk. During catalysis, ATP synthesis in the catalytic domain of F(1) is coupled via a rotary mechanism of the central stalk subunits to proton translocation. Its function is as follows. Component of the F(0) channel, it forms part of the peripheral stalk, linking F(1) to F(0). The chain is ATP synthase subunit b, chloroplastic from Pinus thunbergii (Japanese black pine).